A 101-amino-acid polypeptide reads, in one-letter code: Small ribosomal subunit protein uS14 (101 aa).

The protein belongs to the universal ribosomal protein uS14 family. In terms of assembly, part of the 30S ribosomal subunit. Contacts proteins S3 and S10.

Binds 16S rRNA, required for the assembly of 30S particles and may also be responsible for determining the conformation of the 16S rRNA at the A site. In Acinetobacter baylyi (strain ATCC 33305 / BD413 / ADP1), this protein is Small ribosomal subunit protein uS14.